The primary structure comprises 239 residues: Uridylate kinase (239 aa).

Residue lysine 13–glycine 16 participates in ATP binding. A UMP-binding site is contributed by glycine 55. Residues glycine 56 and arginine 60 each contribute to the ATP site. Residues aspartate 75 and leucine 136–threonine 143 each bind UMP. ATP is bound by residues threonine 163, tyrosine 169, and aspartate 172.

It belongs to the UMP kinase family. In terms of assembly, homohexamer.

Its subcellular location is the cytoplasm. The enzyme catalyses UMP + ATP = UDP + ADP. Its pathway is pyrimidine metabolism; CTP biosynthesis via de novo pathway; UDP from UMP (UMPK route): step 1/1. Its activity is regulated as follows. Inhibited by UTP. Its function is as follows. Catalyzes the reversible phosphorylation of UMP to UDP. The sequence is that of Uridylate kinase from Buchnera aphidicola subsp. Cinara cedri (strain Cc).